The chain runs to 318 residues: Pantothenate kinase (318 aa).

96–103 (GSVAVGKS) contacts ATP.

It belongs to the prokaryotic pantothenate kinase family.

It localises to the cytoplasm. The enzyme catalyses (R)-pantothenate + ATP = (R)-4'-phosphopantothenate + ADP + H(+). It participates in cofactor biosynthesis; coenzyme A biosynthesis; CoA from (R)-pantothenate: step 1/5. The chain is Pantothenate kinase from Afipia carboxidovorans (strain ATCC 49405 / DSM 1227 / KCTC 32145 / OM5) (Oligotropha carboxidovorans).